An 89-amino-acid polypeptide reads, in one-letter code: Putative regulatory protein PCC8801_0196 (89 aa).

It belongs to the RemA family.

In Rippkaea orientalis (strain PCC 8801 / RF-1) (Cyanothece sp. (strain PCC 8801)), this protein is Putative regulatory protein PCC8801_0196.